Reading from the N-terminus, the 231-residue chain is Probable pyridoxamine 5'-phosphate oxidase (231 aa).

20-23 contacts pyridoxal 5'-phosphate; it reads QYEK. 74-77 contacts FMN; the sequence is RLVL. Lysine 79 is a pyridoxal 5'-phosphate binding site. FMN-binding positions include 89-90, 96-97, and glutamine 119; these read FT and KK. The pyridoxal 5'-phosphate site is built by tyrosine 137, arginine 141, and serine 145. FMN is bound by residues 154-155 and tryptophan 202; that span reads QS. 208-210 is a binding site for pyridoxal 5'-phosphate; the sequence is RLH. Arginine 212 contributes to the FMN binding site.

It belongs to the pyridoxamine 5'-phosphate oxidase family. As to quaternary structure, homodimer. The cofactor is FMN.

It catalyses the reaction pyridoxamine 5'-phosphate + O2 + H2O = pyridoxal 5'-phosphate + H2O2 + NH4(+). The enzyme catalyses pyridoxine 5'-phosphate + O2 = pyridoxal 5'-phosphate + H2O2. It functions in the pathway cofactor metabolism; pyridoxal 5'-phosphate salvage; pyridoxal 5'-phosphate from pyridoxamine 5'-phosphate: step 1/1. The protein operates within cofactor metabolism; pyridoxal 5'-phosphate salvage; pyridoxal 5'-phosphate from pyridoxine 5'-phosphate: step 1/1. In terms of biological role, catalyzes the oxidation of either pyridoxine 5'-phosphate (PNP) or pyridoxamine 5'-phosphate (PMP) into pyridoxal 5'-phosphate (PLP). The chain is Probable pyridoxamine 5'-phosphate oxidase from Schizosaccharomyces pombe (strain 972 / ATCC 24843) (Fission yeast).